Here is a 227-residue protein sequence, read N- to C-terminus: Ribonuclease 3 (227 aa).

The RNase III domain maps to 3–130 (TNAISKIIKY…LIGAIYLDGG (128 aa)). Position 43 (Glu43) interacts with Mg(2+). Asp47 is an active-site residue. Mg(2+)-binding residues include Asn116 and Glu119. Residue Glu119 is part of the active site. Residues 155-224 (DAKTILQEWA…ASLMLAKINY (70 aa)) form the DRBM domain.

The protein belongs to the ribonuclease III family. As to quaternary structure, homodimer. Mg(2+) is required as a cofactor.

Its subcellular location is the cytoplasm. It carries out the reaction Endonucleolytic cleavage to 5'-phosphomonoester.. Its function is as follows. Digests double-stranded RNA. Involved in the processing of primary rRNA transcript to yield the immediate precursors to the large and small rRNAs (23S and 16S). Processes some mRNAs, and tRNAs when they are encoded in the rRNA operon. Processes pre-crRNA and tracrRNA of type II CRISPR loci if present in the organism. The chain is Ribonuclease 3 from Ehrlichia ruminantium (strain Welgevonden).